A 539-amino-acid chain; its full sequence is Chaperonin GroEL (539 aa).

ATP contacts are provided by residues 29–32 (TIGP), 86–90 (DGTTT), Gly-413, 476–478 (NAA), and Asp-492.

The protein belongs to the chaperonin (HSP60) family. As to quaternary structure, forms a cylinder of 14 subunits composed of two heptameric rings stacked back-to-back. Interacts with the co-chaperonin GroES.

Its subcellular location is the cytoplasm. The enzyme catalyses ATP + H2O + a folded polypeptide = ADP + phosphate + an unfolded polypeptide.. Its function is as follows. Together with its co-chaperonin GroES, plays an essential role in assisting protein folding. The GroEL-GroES system forms a nano-cage that allows encapsulation of the non-native substrate proteins and provides a physical environment optimized to promote and accelerate protein folding. In Staphylococcus epidermidis (strain ATCC 12228 / FDA PCI 1200), this protein is Chaperonin GroEL.